Reading from the N-terminus, the 257-residue chain is MLILVSPAKTLDFEQPPLTQIHTRPDFLAQSQELIQVCQQLTPSDIATLMKVSDSIAGLNAARFGEWKPDYSIDNAKQAIFAFRGDVYTGFDADTLTAAQLERTQSQLRILSGLYGLLRPLDLILPYRLEMGTALTNQKGKNLYEFWGNTLTDAVNSAVAAQGDGIIINLASNEYFKAIKPKFLNGQLITPVFKDFKNGQYKVISFFAKRARGMMARYIIDQQVSSIDGLKAFEVDGYYYSEELSKPNEPTFLREAQ.

Belongs to the UPF0246 family.

This chain is UPF0246 protein SO_3540, found in Shewanella oneidensis (strain ATCC 700550 / JCM 31522 / CIP 106686 / LMG 19005 / NCIMB 14063 / MR-1).